A 444-amino-acid polypeptide reads, in one-letter code: Exodeoxyribonuclease 7 large subunit (444 aa).

Belongs to the XseA family. In terms of assembly, heterooligomer composed of large and small subunits.

The protein resides in the cytoplasm. It catalyses the reaction Exonucleolytic cleavage in either 5'- to 3'- or 3'- to 5'-direction to yield nucleoside 5'-phosphates.. Functionally, bidirectionally degrades single-stranded DNA into large acid-insoluble oligonucleotides, which are then degraded further into small acid-soluble oligonucleotides. The polypeptide is Exodeoxyribonuclease 7 large subunit (Pseudoalteromonas atlantica (strain T6c / ATCC BAA-1087)).